The primary structure comprises 686 residues: Methionine--tRNA ligase (686 aa).

Residues 15-25 carry the 'HIGH' region motif; that stretch reads PYANGSIHLGH. Zn(2+)-binding residues include Cys146, Cys149, Cys159, and Cys162. Positions 332–336 match the 'KMSKS' region motif; it reads KMSKS. Lys335 contributes to the ATP binding site. One can recognise a tRNA-binding domain in the interval 585-686; it reads AFEAVDMRIA…EGAQPGMRVM (102 aa).

The protein belongs to the class-I aminoacyl-tRNA synthetase family. MetG type 1 subfamily. As to quaternary structure, homodimer. Requires Zn(2+) as cofactor.

The protein resides in the cytoplasm. The enzyme catalyses tRNA(Met) + L-methionine + ATP = L-methionyl-tRNA(Met) + AMP + diphosphate. Functionally, is required not only for elongation of protein synthesis but also for the initiation of all mRNA translation through initiator tRNA(fMet) aminoacylation. This Aliivibrio fischeri (strain MJ11) (Vibrio fischeri) protein is Methionine--tRNA ligase.